Here is a 1028-residue protein sequence, read N- to C-terminus: MADKTPGGSQKASSKTRSSDVHSSGSSDAHMDASGPSDSDMPSRTRPKSPRKHNYRNESARESLCDSPHQNLSRPLLENKLKAFSIGKMSTAKRTLSKKEQEELKKKEDEKAAAEIYEEFLAAFEGSDGNKVKTFVRGGVVNAAKEEHETDEKRGKIYKPSSRFADQKNPPNQSSNERPPSLLVIETKKPPLKKGEKEKKKSNLELFKEELKQIQEERDERHKTKGRLSRFEPPQSDSDGQRRSMDAPSRRNRSSVLDDYAPGSHDVGDPSTTNLYLGNINPQMNEEMLCQEFGRFGPLASVKIMWPRTDEERARERNCGFVAFMNRRDAERALKNLNGKMIMSFEMKLGWGKAVPIPPHPIYIPPSMMEHTLPPPPSGLPFNAQPRERLKNPNAPMLPPPKNKEDFEKTLSQAIVKVVIPTERNLLALIHRMIEFVVREGPMFEAMIMNREINNPMFRFLFENQTPAHVYYRWKLYSILQGDSPTKWRTEDFRMFKNGSFWRPPPLNPYLHGMSEEQETEAFVEEPSKKGALKEEQRDKLEEILRGLTPRKNDIGDAMVFCLNNAEAAEEIVDCITESLSILKTPLPKKIARLYLVSDVLYNSSAKVANASYYRKFFETKLCQIFSDLNATYRTIQGHLQSENFKQRVMTCFRAWEDWAIYPEPFLIKLQNIFLGLVNIIEEKETEDVPDDLDGAPIEEELDGAPLEDVDGIPIDATPIDDLDGVPIKSLDDDLDGVPLDATEDSKKNEPIFKVAPSKWEAVDESELEAQAVTTSKWELFDQHEESEEEENQNQEEESEDEEDTQSSKSEEHHLYSNPIKEEMTESKFSKYSEMSEEKRAKLREIELKVMKFQDELESGKRPKKPGQSFQEQVEHYRDKLLQREKEKELERERERDKKDKEKLESRSKDEKEKDECTPTRKERKRRHSTSPSPSRSSSGRRVKSPSPKSERSERSERSHKESSRSRSSHKDSPRDVSKKAKRSPSGSRTPKRSRRSRSRSPKKSGKKSRSQSRSPHRSHKKSKKNKH.

Disordered regions lie at residues 1-111 (MADK…EDEK) and 141-272 (VNAA…DPST). A2 carries the N-acetylalanine modification. Positions 7–16 (GGSQKASSKT) are enriched in polar residues. Basic residues predominate over residues 45 to 54 (TRPKSPRKHN). Basic and acidic residues predominate over residues 55-64 (YRNESARESL). A Phosphoserine modification is found at S67. K80 participates in a covalent cross-link: Glycyl lysine isopeptide (Lys-Gly) (interchain with G-Cter in SUMO2). A coiled-coil region spans residues 92–121 (AKRTLSKKEQEELKKKEDEKAAAEIYEEFL). 2 stretches are compositionally biased toward basic and acidic residues: residues 97–111 (SKKE…EDEK) and 144–155 (AKEEHETDEKRG). Residues K145 and K168 each participate in a glycyl lysine isopeptide (Lys-Gly) (interchain with G-Cter in SUMO2) cross-link. Residues 169–178 (NPPNQSSNER) are compositionally biased toward polar residues. Residues 186–222 (ETKKPPLKKGEKEKKKSNLELFKEELKQIQEERDERH) show a composition bias toward basic and acidic residues. A coiled-coil region spans residues 192–232 (LKKGEKEKKKSNLELFKEELKQIQEERDERHKTKGRLSRFE). At S202 the chain carries Phosphoserine. Residue K208 forms a Glycyl lysine isopeptide (Lys-Gly) (interchain with G-Cter in SUMO2) linkage. S236 is modified (phosphoserine). The segment covering 239–249 (DGQRRSMDAPS) has biased composition (basic and acidic residues). In terms of domain architecture, RRM spans 273–354 (TNLYLGNINP…FEMKLGWGKA (82 aa)). Residues 429 to 472 (LIHRMIEFVVREGPMFEAMIMNREINNPMFRFLFENQTPAHVYY) form an SURP motif repeat. Position 484 is a phosphoserine (S484). The CID domain occupies 533–678 (LKEEQRDKLE…KLQNIFLGLV (146 aa)). Phosphothreonine is present on T718. Residues K747 and K748 each participate in a glycyl lysine isopeptide (Lys-Gly) (interchain with G-Cter in SUMO2) cross-link. At K759 the chain carries N6-acetyllysine; alternate. K759 is covalently cross-linked (Glycyl lysine isopeptide (Lys-Gly) (interchain with G-Cter in SUMO2); alternate). Disordered stretches follow at residues 777–840 (KWEL…EEKR) and 854–1028 (QDEL…KNKH). Residues 779–809 (ELFDQHEESEEEENQNQEEESEDEEDTQSSK) adopt a coiled-coil conformation. Residues 785 to 805 (EESEEEENQNQEEESEDEEDT) show a composition bias toward acidic residues. Residues S787, S799, and S810 each carry the phosphoserine modification. 2 stretches are compositionally biased toward basic and acidic residues: residues 809 to 840 (KSEE…EEKR) and 873 to 921 (QVEH…TPTR). Residues K821, K828, and K831 each participate in a glycyl lysine isopeptide (Lys-Gly) (interchain with G-Cter in SUMO2) cross-link. Residues 836–914 (SEEKRAKLRE…ESRSKDEKEK (79 aa)) adopt a coiled-coil conformation. Position 930 is a phosphothreonine (T930). A phosphoserine mark is found at S945 and S947. Residues 949 to 979 (KSERSERSERSHKESSRSRSSHKDSPRDVSK) show a composition bias toward basic and acidic residues. Basic residues predominate over residues 990–1028 (TPKRSRRSRSRSPKKSGKKSRSQSRSPHRSHKKSKKNKH).

The protein belongs to the splicing factor SR family. In terms of assembly, interacts with ERBB4.

It localises to the nucleus. This Pongo abelii (Sumatran orangutan) protein is U2 snRNP-associated SURP motif-containing protein (U2SURP).